Reading from the N-terminus, the 106-residue chain is Large ribosomal subunit protein eL34 (106 aa).

Belongs to the eukaryotic ribosomal protein eL34 family.

The protein is Large ribosomal subunit protein eL34 of Hyperthermus butylicus (strain DSM 5456 / JCM 9403 / PLM1-5).